Here is a 100-residue protein sequence, read N- to C-terminus: uncharacterized protein (100 aa).

Helical transmembrane passes span 1-21 (MLVL…YKVK) and 54-74 (MILF…VIGA).

Its subcellular location is the cell membrane. This is an uncharacterized protein from Bacillus subtilis (strain 168).